Reading from the N-terminus, the 152-residue chain is Adenosine 5'-monophosphoramidase HNT1 (152 aa).

Residues 8 to 119 form the HIT domain; the sequence is IFCKIIKGEI…IPKKDEATGL (112 aa). Residues 33 to 34, Asn-93, 99 to 101, and 106 to 108 contribute to the AMP site; these read DI, HQV, and HFH. A Histidine triad motif motif is present at residues 104–108; the sequence is HVHFH. The Tele-AMP-histidine intermediate role is filled by His-106.

The protein belongs to the HINT family. In terms of assembly, homodimer. The cofactor is Mg(2+).

It catalyses the reaction adenosine 5'-phosphoramidate + H2O = AMP + NH4(+). In terms of biological role, hydrolyzes adenosine 5'-monophosphoramidate substrates such as AMP-morpholidate, AMP-N-alanine methyl ester, AMP-alpha-acetyl lysine methyl ester and AMP-NH2. This is Adenosine 5'-monophosphoramidase HNT1 from Candida albicans (strain SC5314 / ATCC MYA-2876) (Yeast).